Consider the following 118-residue polypeptide: UPF0344 protein Aflv_2205 (118 aa).

4 helical membrane-spanning segments follow: residues 4 to 24 (AHIT…ALQA), 32 to 52 (MLHM…AWIL), 60 to 80 (FLYI…EMIL), and 96 to 116 (FIVA…GFSF).

This sequence belongs to the UPF0344 family.

Its subcellular location is the cell membrane. The sequence is that of UPF0344 protein Aflv_2205 from Anoxybacillus flavithermus (strain DSM 21510 / WK1).